A 690-amino-acid polypeptide reads, in one-letter code: Probable xyloglucan glycosyltransferase 1 (690 aa).

2 helical membrane-spanning segments follow: residues 120 to 140 (AFLL…AQGW) and 166 to 186 (LEYL…LFLI). Residue Asp272 is part of the active site. Substrate contacts are provided by Asp331 and Asp333. Residue Asp425 is part of the active site. The next 2 helical transmembrane spans lie at 503–523 (LILP…TMFV) and 528–548 (LPAW…ILPA). The interval 607–637 (QPKQQRVGSAPNLDSLAKESHPKKDSKKKKH) is disordered. 2 consecutive transmembrane segments (helical) span residues 640–659 (IYQK…ARSL) and 665–685 (IHFY…LDLI).

This sequence belongs to the glycosyltransferase 2 family. Plant cellulose synthase-like C subfamily.

Its subcellular location is the golgi apparatus membrane. Probable beta-1,4-glucan synthase rather involved in the synthesis of the xyloglucan backbone than cellulose. Seems to work simultaneously with xyloglucan 6-xylosyltransferase. Xyloglucan is a noncellulosic polysaccharides of plant cell wall and consists of a glucan backbone substituted by xylose, galactose and fucose. The chain is Probable xyloglucan glycosyltransferase 1 (CSLC1) from Oryza sativa subsp. japonica (Rice).